We begin with the raw amino-acid sequence, 307 residues long: Ubiquitin recognition factor in ER-associated degradation protein 1 (307 aa).

N-acetylmethionine is present on M1. 5 positions are modified to phosphoserine: S129, S231, S245, S247, and S299. Disordered stretches follow at residues 230–255 (GSGNRLDGKKKGVEPSPSPIKPGDIK) and 288–307 (GRFIAFSGEGQSLRKKGRKP).

Belongs to the UFD1 family. Heterodimer with NPLOC4, this heterodimer binds VCP and inhibits Golgi membrane fusion. Interacts with USP13. Interacts with ZFAND2B; probably through VCP.

Its subcellular location is the nucleus. The protein localises to the cytoplasm. The protein resides in the cytosol. It participates in protein degradation; proteasomal ubiquitin-dependent pathway. In terms of biological role, essential component of the ubiquitin-dependent proteolytic pathway which degrades ubiquitin fusion proteins. The ternary complex containing UFD1, VCP and NPLOC4 binds ubiquitinated proteins and is necessary for the export of misfolded proteins from the ER to the cytoplasm, where they are degraded by the proteasome. The NPLOC4-UFD1-VCP complex regulates spindle disassembly at the end of mitosis and is necessary for the formation of a closed nuclear envelope. It may be involved in the development of some ectoderm-derived structures. Acts as a negative regulator of type I interferon production via the complex formed with VCP and NPLOC4, which binds to RIGI and recruits RNF125 to promote ubiquitination and degradation of RIGI. This is Ubiquitin recognition factor in ER-associated degradation protein 1 from Mus musculus (Mouse).